The primary structure comprises 263 residues: 3'-5' ssDNA/RNA exonuclease TatD (263 aa).

Glutamate 91, histidine 127, and histidine 152 together coordinate a divalent metal cation.

Belongs to the metallo-dependent hydrolases superfamily. TatD-type hydrolase family. TatD subfamily. As to quaternary structure, monomer. Mg(2+) is required as a cofactor.

Its subcellular location is the cytoplasm. 3'-5' exonuclease that prefers single-stranded DNA and RNA. May play a role in the H(2)O(2)-induced DNA damage repair. This chain is 3'-5' ssDNA/RNA exonuclease TatD, found in Cronobacter turicensis (strain DSM 18703 / CCUG 55852 / LMG 23827 / z3032).